Consider the following 517-residue polypeptide: Maturase K (517 aa).

The protein belongs to the intron maturase 2 family. MatK subfamily.

It localises to the plastid. Its subcellular location is the chloroplast. Functionally, usually encoded in the trnK tRNA gene intron. Probably assists in splicing its own and other chloroplast group II introns. This Palhinhaea cernua (Nodding clubmoss) protein is Maturase K.